The sequence spans 158 residues: Cyclic pyranopterin monophosphate synthase (158 aa).

Residues 76–78 (LCH) and 114–115 (ME) each bind substrate. The active site involves Asp129.

This sequence belongs to the MoaC family. In terms of assembly, homohexamer; trimer of dimers.

The enzyme catalyses (8S)-3',8-cyclo-7,8-dihydroguanosine 5'-triphosphate = cyclic pyranopterin phosphate + diphosphate. The protein operates within cofactor biosynthesis; molybdopterin biosynthesis. In terms of biological role, catalyzes the conversion of (8S)-3',8-cyclo-7,8-dihydroguanosine 5'-triphosphate to cyclic pyranopterin monophosphate (cPMP). This chain is Cyclic pyranopterin monophosphate synthase, found in Shewanella woodyi (strain ATCC 51908 / MS32).